Here is a 349-residue protein sequence, read N- to C-terminus: Rhodopsin (349 aa).

Residues 1 to 33 (TEGPYFYIPMSNATGIVRSPYEYPQYYLVYPAA) are Extracellular-facing. Asparagine 12 carries N-linked (GlcNAc...) asparagine glycosylation. Residues 34-58 (YAVLGAYMFFLIIFGFPVNFLTLYV) form a helical membrane-spanning segment. Over 59–70 (TIEHKKLRTPLN) the chain is Cytoplasmic. Residues 71-93 (YILLNLAVADLFMVIGGFTTTIY) form a helical membrane-spanning segment. Over 94–107 (TSMHGYFVLGRLGC) the chain is Extracellular. Cysteine 107 and cysteine 184 are disulfide-bonded. A helical membrane pass occupies residues 108-130 (NLEGFSATLGGMIGLWSLVVLAI). The 'Ionic lock' involved in activated form stabilization signature appears at 131-133 (ERW). At 131 to 149 (ERWVVVCKPMSNFRFGENH) the chain is on the cytoplasmic side. Residues 150–170 (AIMGVTLTWVMGLACTVPPLV) traverse the membrane as a helical segment. Topologically, residues 171 to 199 (GWSRYIPEGMQCSCGIDYYTRAEGFNNDS) are extracellular. Residue asparagine 197 is glycosylated (N-linked (GlcNAc...) asparagine). A helical transmembrane segment spans residues 200–221 (YVLYMFVCHFLIPLVVIFFCYG). Residues 222-249 (RLLCAVKEAAAAQQESETTQRAEREVTR) are Cytoplasmic-facing. Residues 250-271 (MVILMVIGFLVCWLPYASVAWY) form a helical membrane-spanning segment. Over 272–283 (IFTHQGSEFGPL) the chain is Extracellular. Residues 284–305 (FMTIPAFFAKSSSIYNPVIYIC) form a helical membrane-spanning segment. Position 293 is an N6-(retinylidene)lysine (lysine 293). Residues 306–349 (MNKQFRQCMLTTLFCGKNPFEEEEGASSTKTEASSASSSSVSPA) lie on the Cytoplasmic side of the membrane. A lipid anchor (S-palmitoyl cysteine) is attached at cysteine 320. A disordered region spans residues 326–349 (EEEEGASSTKTEASSASSSSVSPA). Residues 331–349 (ASSTKTEASSASSSSVSPA) are compositionally biased toward low complexity.

The protein belongs to the G-protein coupled receptor 1 family. Opsin subfamily. In terms of processing, phosphorylated on some or all of the serine and threonine residues present in the C-terminal region. Contains one covalently linked retinal chromophore.

The protein resides in the membrane. It is found in the cell projection. It localises to the cilium. The protein localises to the photoreceptor outer segment. Photoreceptor required for image-forming vision at low light intensity. While most salt water fish species use retinal as chromophore, most freshwater fish use 3-dehydroretinal, or a mixture of retinal and 3-dehydroretinal. Light-induced isomerization of 11-cis to all-trans retinal triggers a conformational change that activates signaling via G-proteins. Subsequent receptor phosphorylation mediates displacement of the bound G-protein alpha subunit by arrestin and terminates signaling. The chain is Rhodopsin (rho) from Myripristis violacea (Lattice soldierfish).